Reading from the N-terminus, the 406-residue chain is Endoglucanase 1 (406 aa).

The first 43 residues, 1–43 (MNSKKIGAMIAAAVLSLIVMTPAATRKIVQRQTRNSSTAVENS), serve as a signal peptide directing secretion. 2 stretches are compositionally biased toward polar residues: residues 30–41 (QRQTRNSSTAVE) and 51–62 (ENVPVSQTHTND). Positions 30-62 (QRQTRNSSTAVENSAADESETENVPVSQTHTND) are disordered. The Proton donor role is filled by glutamate 210. Residue glutamate 330 is the Nucleophile of the active site.

Belongs to the glycosyl hydrolase 5 (cellulase A) family.

The catalysed reaction is Endohydrolysis of (1-&gt;4)-beta-D-glucosidic linkages in cellulose, lichenin and cereal beta-D-glucans.. This Ruminococcus albus protein is Endoglucanase 1 (Eg I).